A 151-amino-acid chain; its full sequence is MRRLLLVTSLVVVLLWEAGAVPAPKVPIKMQVKHWPSEQDPEKAWGARVVEPPEKDDQLVVLFPVQKPKLLTTEEKPRGQGRGPILPGTKAWMETEDTLGHVLSPEPDHDSLYHPPPEEDQGEERPRLWVMPNHQVLLGPEEDQDHIYHPQ.

An N-terminal signal peptide occupies residues 1 to 20 (MRRLLLVTSLVVVLLWEAGA). The tract at residues 71 to 151 (LTTEEKPRGQ…EDQDHIYHPQ (81 aa)) is disordered.

Interacts with isoform 1 and isoform 3 of MAD1L1. Interacts with MTTP. As to expression, highly expressed in the intestinal epithelial cells (at protein level). Abundantly expressed in the epithelial cells of the liver, kidney and cervix. Significantly down-regulated in hepatocellular carcinoma and right colon adenocarcinoma compared with the respective adjacent normal tissues. Expressed in epididymis (at protein level).

It is found in the secreted. The protein localises to the endoplasmic reticulum. Lipid-binding protein which promotes lipid absorption by facilitating MTTP-mediated lipid transfer (mainly triglycerides and phospholipids) and MTTP-mediated apoB lipoprotein assembly and secretion. Protects the gastrointestinal epithelium from irradiation-induced apoptosis. May play an important role in maintaining normal growth homeostasis in epithelial cells. Involved in p53/TP53-dependent cell survival after DNA damage. May down-regulate the expression of MAD1L1 and exert a suppressive role in mitotic spindle assembly checkpoint in hepatocellular carcinomas. The protein is Proline-rich acidic protein 1 (PRAP1) of Homo sapiens (Human).